A 216-amino-acid chain; its full sequence is Adenylate kinase (216 aa).

10–15 is a binding site for ATP; sequence GAGKGT. An NMP region spans residues 30-59; that stretch reads STGDMLRAAVSAQTEVGKRAKAVMDAGKLV. AMP is bound by residues T31, R36, 57–59, 85–88, and Q92; these read KLV and GFPR. Residues 126–163 form an LID region; it reads GRYTCANCGTGYHDENLKPKVEGVCDKCGSTHFKRRPD. R127 contributes to the ATP binding site. Residues C130, C133, C150, and C153 each coordinate Zn(2+). AMP-binding residues include R160 and R172. A200 provides a ligand contact to ATP.

The protein belongs to the adenylate kinase family. As to quaternary structure, monomer.

The protein localises to the cytoplasm. The catalysed reaction is AMP + ATP = 2 ADP. Its pathway is purine metabolism; AMP biosynthesis via salvage pathway; AMP from ADP: step 1/1. Catalyzes the reversible transfer of the terminal phosphate group between ATP and AMP. Plays an important role in cellular energy homeostasis and in adenine nucleotide metabolism. The polypeptide is Adenylate kinase (Allorhizobium ampelinum (strain ATCC BAA-846 / DSM 112012 / S4) (Agrobacterium vitis (strain S4))).